We begin with the raw amino-acid sequence, 591 residues long: MSLLLAPPSYFPFRGLRRSTAAKQPPCLRLVKCTADRQSPEAARRSAHYQPNMWSDDYIQSLTVESPLKVEEKEQTKKLMLLKERIAEVICEGKEVEEQLRLIDHLQQLGVAYHFKDDIKASLRNIHSSLEEISSTIIFKDGLHASALLFRLLRENGFSISEDIFEEFRDEKGQYFRSDGLKNQTDQAMLSLYEASYYEKDGEMVLQEAMECTTKHLENLLEEEGSDLKLKEQAAHALELPLNWRMERLHARWFIEACQREVMVIDNPLLLEFAKLDFNAVQSIYKKELSALSRWWTKLGVVEKLPFARDRLTENYLWTVGWAFEPEHWSFRDAQTKGNCFVTMIDDVYDVYGTLDELELFTHVVDRWDINAIDQLPDYMKILFLALFNTVNDDGYKVMKEKGLDVIPYLKRSWADLCKAYLVEAKWYHRGYKPTINEYLDNTWISISGPAIFTNAYCMANNLTKQDLERFSEYPAIAKHSSMLGRLYNDLATSTAEIERGDVPKSIQCCMHERGVSEGVAREQVKELIRGNWRCMNGDRAAASSFEEMLKTVAVDIARASQFFYHNGDKYGKADGETMTQVMSLLINPII.

The N-terminal 46 residues, 1-46 (MSLLLAPPSYFPFRGLRRSTAAKQPPCLRLVKCTADRQSPEAARRS), are a transit peptide targeting the chloroplast. Mg(2+)-binding residues include Asp-346, Asp-350, and Glu-497. The short motif at 346–350 (DDVYD) is the DDXXD motif element.

This sequence belongs to the terpene synthase family. Tpsa subfamily. The cofactor is Mg(2+). Requires Mn(2+) as cofactor. Highly expressed in flowers, petals and sepals, but almost undetectable in vegetative organs.

The protein localises to the plastid. It localises to the chloroplast. It catalyses the reaction (2E)-geranyl diphosphate + H2O = (R)-linalool + diphosphate. It carries out the reaction (2E)-geranyl diphosphate + H2O = (S)-linalool + diphosphate. The enzyme catalyses (2E,6E)-farnesyl diphosphate = (S)-beta-bisabolene + diphosphate. The catalysed reaction is (2E,6E)-farnesyl diphosphate = (E,R)-alpha-bisabolene + diphosphate. It catalyses the reaction (2E,6E)-farnesyl diphosphate = (E)-beta-farnesene + diphosphate. It carries out the reaction (2E,6E)-farnesyl diphosphate = beta-sesquiphellandrene + diphosphate. The enzyme catalyses (2E,6E)-farnesyl diphosphate = (1S,5S,6R)-alpha-bergamotene + diphosphate. Its pathway is secondary metabolite biosynthesis; terpenoid biosynthesis. Sesquiterpene and monoterpene synthase involved in the biosynthesis of volatile compounds present in floral scent. Mediates the conversion of (2E)-geranyl diphosphate (GPP) into linalool, with trace levels of myrcene, limonene and (Z)-beta-ocimene. Also acts as a sesquiterpene synthase by catalyzing the conversion of farnesyl diphosphate (FPP) to alpha-bergamotene and beta-bisabolene and to minor products including alpha-curcumene, cis-alpha-bisabolene, beta-farnesene and beta-sesquiphellandrene, as well as seven other unidentified sesquiterpenes. The chain is Monoterpene synthase 8, chloroplastic from Hedychium coronarium (White butterfly ginger-lily).